The following is a 166-amino-acid chain: Small ribosomal subunit protein uS5 (166 aa).

The S5 DRBM domain occupies 11–74; that stretch reads LQEKLIAVNR…EKARRNMMNV (64 aa).

This sequence belongs to the universal ribosomal protein uS5 family. In terms of assembly, part of the 30S ribosomal subunit. Contacts proteins S4 and S8.

Its function is as follows. With S4 and S12 plays an important role in translational accuracy. In terms of biological role, located at the back of the 30S subunit body where it stabilizes the conformation of the head with respect to the body. The polypeptide is Small ribosomal subunit protein uS5 (Pectobacterium atrosepticum (strain SCRI 1043 / ATCC BAA-672) (Erwinia carotovora subsp. atroseptica)).